We begin with the raw amino-acid sequence, 514 residues long: Protein spinster homolog 3 (514 aa).

The tract at residues 1-22 is disordered; that stretch reads MSTECLKPQTGGPQSQSLSQGG. A compositionally biased stretch (low complexity) spans 9-21; it reads QTGGPQSQSLSQG. 12 consecutive transmembrane segments (helical) span residues 54 to 74, 88 to 108, 116 to 136, 149 to 169, 176 to 196, 212 to 232, 264 to 284, 313 to 333, 347 to 367, 376 to 396, 415 to 435, and 453 to 473; these read VLCYINLLNYMNWFIIPGVLL, GLLQTVFISCLLVSAPVFGYL, AILSFGILLWSGAGLSSSFIS, FVGTGAASYSTIAPTVLGDLF, CALAVFYIFIPVGSGLGYVLG, LMPCLDAMALALLILLVPDVP, FVFSTLGVTAIAFVTGALGFW, LIFGALTVATGIIGVMLGAEA, LICASSLFATAPCLYLALILA, VFLALGELLLSCNWAVVADIL, VAHVLGDAGSPYLTGLISSVL, and SFLCCAFAIVLGGGFFLLTAL. The tract at residues 482–514 is disordered; the sequence is ARQPGKGTLDSKDIASRNTESQGLLSGTSTPTE. A compositionally biased stretch (polar residues) spans 497-514; that stretch reads SRNTESQGLLSGTSTPTE.

This sequence belongs to the major facilitator superfamily. Spinster (TC 2.A.1.49) family.

The protein resides in the membrane. In terms of biological role, sphingolipid transporter. This Mus musculus (Mouse) protein is Protein spinster homolog 3 (Spns3).